The primary structure comprises 701 residues: Protein SOSEKI 1 (701 aa).

Positions L8 to D101 are DIX-like oligomerization domain. Disordered regions lie at residues S238–G262, L300–E329, P366–K389, and I538–P575. The segment covering S306–S319 has biased composition (basic and acidic residues). A C2HC/C3H-type zinc finger spans residues I658–A687. Zn(2+) is bound by residues C662, C665, H677, and C681.

This sequence belongs to the SOSEKI family. In terms of assembly, homodimer. Forms long polymer filaments with other SOKs proteins polymers crucial for polar localization and biological activity. It depends on Zn(2+) as a cofactor.

It is found in the cell membrane. Its function is as follows. SOSEKI proteins locally interpret global polarity cues and can influence cell division orientation to coordinate cell polarization relative to body axes. The polypeptide is Protein SOSEKI 1 (Physcomitrium patens (Spreading-leaved earth moss)).